Reading from the N-terminus, the 155-residue chain is uncharacterized protein (155 aa).

An N-terminal signal peptide occupies residues 1 to 21; that stretch reads MFFIVAAGFVIAALIAAIGMA. The interval 35–155 is disordered; it reads GQTKPATTRP…PVYRPPEEMV (121 aa). Residues 118–128 are compositionally biased toward polar residues; the sequence is ATASNTPQNEA.

This is an uncharacterized protein from Schizosaccharomyces pombe (strain 972 / ATCC 24843) (Fission yeast).